A 286-amino-acid chain; its full sequence is Protoheme IX farnesyltransferase (286 aa).

8 helical membrane passes run 14 to 31, 38 to 58, 94 to 114, 135 to 155, 165 to 185, 207 to 227, 228 to 248, and 262 to 282; these read FRLT…YILA, WLNL…ANII, LFLI…ALIL, IAVF…WIAV, VLFA…AWVL, TATI…LPYL, FGMS…LFFF, and ALLL…AFVL.

The protein belongs to the UbiA prenyltransferase family. Protoheme IX farnesyltransferase subfamily.

The protein resides in the cell inner membrane. It carries out the reaction heme b + (2E,6E)-farnesyl diphosphate + H2O = Fe(II)-heme o + diphosphate. The protein operates within porphyrin-containing compound metabolism; heme O biosynthesis; heme O from protoheme: step 1/1. In terms of biological role, converts heme B (protoheme IX) to heme O by substitution of the vinyl group on carbon 2 of heme B porphyrin ring with a hydroxyethyl farnesyl side group. The chain is Protoheme IX farnesyltransferase from Cytophaga hutchinsonii (strain ATCC 33406 / DSM 1761 / CIP 103989 / NBRC 15051 / NCIMB 9469 / D465).